Reading from the N-terminus, the 245-residue chain is DNA polymerase sliding clamp (245 aa).

Belongs to the PCNA family. As to quaternary structure, homotrimer. The subunits circularize to form a toroid; DNA passes through its center. Replication factor C (RFC) is required to load the toroid on the DNA.

Sliding clamp subunit that acts as a moving platform for DNA processing. Responsible for tethering the catalytic subunit of DNA polymerase and other proteins to DNA during high-speed replication. This Methanosarcina barkeri (strain Fusaro / DSM 804) protein is DNA polymerase sliding clamp.